Here is a 251-residue protein sequence, read N- to C-terminus: Imidazole glycerol phosphate synthase subunit HisF (251 aa).

Active-site residues include Asp-11 and Asp-130.

It belongs to the HisA/HisF family. In terms of assembly, heterodimer of HisH and HisF.

Its subcellular location is the cytoplasm. It carries out the reaction 5-[(5-phospho-1-deoxy-D-ribulos-1-ylimino)methylamino]-1-(5-phospho-beta-D-ribosyl)imidazole-4-carboxamide + L-glutamine = D-erythro-1-(imidazol-4-yl)glycerol 3-phosphate + 5-amino-1-(5-phospho-beta-D-ribosyl)imidazole-4-carboxamide + L-glutamate + H(+). It functions in the pathway amino-acid biosynthesis; L-histidine biosynthesis; L-histidine from 5-phospho-alpha-D-ribose 1-diphosphate: step 5/9. Its function is as follows. IGPS catalyzes the conversion of PRFAR and glutamine to IGP, AICAR and glutamate. The HisF subunit catalyzes the cyclization activity that produces IGP and AICAR from PRFAR using the ammonia provided by the HisH subunit. The protein is Imidazole glycerol phosphate synthase subunit HisF of Chlorobium phaeovibrioides (strain DSM 265 / 1930) (Prosthecochloris vibrioformis (strain DSM 265)).